Reading from the N-terminus, the 459-residue chain is Bifunctional protein GlmU (459 aa).

Residues 1 to 229 (MSNFAIILAA…FDESLGVNDR (229 aa)) are pyrophosphorylase. Residues 8–11 (LAAG), Lys22, Gln72, and 77–78 (GT) each bind UDP-N-acetyl-alpha-D-glucosamine. A Mg(2+)-binding site is contributed by Asp102. The UDP-N-acetyl-alpha-D-glucosamine site is built by Gly139, Glu154, Asn169, and Asn227. Residue Asn227 participates in Mg(2+) binding. Positions 230–250 (VALATAESVMRRRINHKHMVN) are linker. The tract at residues 251–459 (GVSFVNPEAT…TRLPHHPKNQ (209 aa)) is N-acetyltransferase. Residues Arg332 and Lys350 each coordinate UDP-N-acetyl-alpha-D-glucosamine. Residue His362 is the Proton acceptor of the active site. UDP-N-acetyl-alpha-D-glucosamine is bound by residues Tyr365 and Asn376. Residues Ala379, 385-386 (NY), Ser404, Ala422, and Arg439 each bind acetyl-CoA.

This sequence in the N-terminal section; belongs to the N-acetylglucosamine-1-phosphate uridyltransferase family. The protein in the C-terminal section; belongs to the transferase hexapeptide repeat family. As to quaternary structure, homotrimer. The cofactor is Mg(2+).

The protein localises to the cytoplasm. It catalyses the reaction alpha-D-glucosamine 1-phosphate + acetyl-CoA = N-acetyl-alpha-D-glucosamine 1-phosphate + CoA + H(+). The catalysed reaction is N-acetyl-alpha-D-glucosamine 1-phosphate + UTP + H(+) = UDP-N-acetyl-alpha-D-glucosamine + diphosphate. It functions in the pathway nucleotide-sugar biosynthesis; UDP-N-acetyl-alpha-D-glucosamine biosynthesis; N-acetyl-alpha-D-glucosamine 1-phosphate from alpha-D-glucosamine 6-phosphate (route II): step 2/2. Its pathway is nucleotide-sugar biosynthesis; UDP-N-acetyl-alpha-D-glucosamine biosynthesis; UDP-N-acetyl-alpha-D-glucosamine from N-acetyl-alpha-D-glucosamine 1-phosphate: step 1/1. The protein operates within bacterial outer membrane biogenesis; LPS lipid A biosynthesis. Its function is as follows. Catalyzes the last two sequential reactions in the de novo biosynthetic pathway for UDP-N-acetylglucosamine (UDP-GlcNAc). The C-terminal domain catalyzes the transfer of acetyl group from acetyl coenzyme A to glucosamine-1-phosphate (GlcN-1-P) to produce N-acetylglucosamine-1-phosphate (GlcNAc-1-P), which is converted into UDP-GlcNAc by the transfer of uridine 5-monophosphate (from uridine 5-triphosphate), a reaction catalyzed by the N-terminal domain. This is Bifunctional protein GlmU from Streptococcus pneumoniae (strain Taiwan19F-14).